Reading from the N-terminus, the 186-residue chain is ATP synthase subunit delta (186 aa).

Belongs to the ATPase delta chain family. As to quaternary structure, F-type ATPases have 2 components, F(1) - the catalytic core - and F(0) - the membrane proton channel. F(1) has five subunits: alpha(3), beta(3), gamma(1), delta(1), epsilon(1). CF(0) has four main subunits: a(1), b(1), b'(1) and c(10-14). The alpha and beta chains form an alternating ring which encloses part of the gamma chain. F(1) is attached to F(0) by a central stalk formed by the gamma and epsilon chains, while a peripheral stalk is formed by the delta, b and b' chains.

It localises to the cell inner membrane. In terms of biological role, f(1)F(0) ATP synthase produces ATP from ADP in the presence of a proton or sodium gradient. F-type ATPases consist of two structural domains, F(1) containing the extramembraneous catalytic core and F(0) containing the membrane proton channel, linked together by a central stalk and a peripheral stalk. During catalysis, ATP synthesis in the catalytic domain of F(1) is coupled via a rotary mechanism of the central stalk subunits to proton translocation. Functionally, this protein is part of the stalk that links CF(0) to CF(1). It either transmits conformational changes from CF(0) to CF(1) or is implicated in proton conduction. In Rhodopseudomonas palustris (strain BisB18), this protein is ATP synthase subunit delta.